The sequence spans 432 residues: Cyclic GMP-AMP synthase-like receptor (432 aa).

ATP is bound by residues serine 59 and 71-73 (EFD). Glutamate 71, aspartate 73, and aspartate 205 together coordinate Mg(2+). GTP contacts are provided by residues aspartate 205 and 255–262 (KQTCSVLE). Residues 259-262 (SVLE), lysine 284, and 303-307 (TYALK) contribute to the ATP site.

The protein belongs to the mab-21 family. Mg(2+) serves as cofactor. It depends on Mn(2+) as a cofactor.

The catalysed reaction is GTP + ATP = 2',3'-cGAMP + 2 diphosphate. It catalyses the reaction GTP + ATP = pppGp(2'-5')A + diphosphate. It carries out the reaction pppGp(2'-5')A = 2',3'-cGAMP + diphosphate. Functionally, nucleotidyltransferase that catalyzes the formation of cyclic GMP-AMP (2',3'-cGAMP) from ATP and GTP and plays a key role in innate immunity. Directly binds some unknown ligand, activating the nucleotidyltransferase activity, leading to synthesis of 2',3'-cGAMP, a second messenger that binds to and activates Sting, thereby triggering the immune response via activation of the NF-kappa-B transcription factor. The protein is Cyclic GMP-AMP synthase-like receptor of Pocillopora damicornis (Cauliflower coral).